A 339-amino-acid polypeptide reads, in one-letter code: Putative adenosine/adenine deaminase (339 aa).

Zn(2+)-binding residues include His-16, His-18, and His-200. Residue His-18 coordinates substrate. The active-site Proton donor is Glu-203. Asp-281 is a binding site for Zn(2+). Residue Asp-282 coordinates substrate.

The protein belongs to the metallo-dependent hydrolases superfamily. Adenosine and AMP deaminases family. It depends on Zn(2+) as a cofactor.

Its function is as follows. Putative nucleoside deaminase. May catalyze the hydrolytic deamination of adenosine or some similar substrate and play a role in purine metabolism. The chain is Putative adenosine/adenine deaminase from Streptomyces virginiae (Streptomyces cinnamonensis).